The primary structure comprises 848 residues: Coiled-coil domain-containing protein 110 (848 aa).

Positions 41–62 (SEGVKESGGNEPEYGCASEPEN) are disordered. Residues 442-794 (LQNYLKESLQ…LSDKVSSQNN (353 aa)) are a coiled coil. Residue Ser-620 is modified to Phosphoserine.

It is found in the nucleus. The polypeptide is Coiled-coil domain-containing protein 110 (Ccdc110) (Mus musculus (Mouse)).